The sequence spans 150 residues: MKQFEIVTQPIETEQYRDFTINERQGAVVVFTGHVREWTKGIRTQHLEYEAYIPMAEKKLAQIGKEIEEKWPGTITTIVHRIGPLQISDIAVLIAVSSPHRKAAYAANEYAIERIKEIVPIWKKEIWEDGAEWQGHQKGTYNEAKKGKAR.

Substrate contacts are provided by residues 34–36 (HVR), Thr44, 100–101 (HR), Lys116, and 123–125 (KKE).

This sequence belongs to the MoaE family. Heterotetramer of 2 MoaD subunits and 2 MoaE subunits. Also stable as homodimer. The enzyme changes between these two forms during catalysis.

It carries out the reaction 2 [molybdopterin-synthase sulfur-carrier protein]-C-terminal-Gly-aminoethanethioate + cyclic pyranopterin phosphate + H2O = molybdopterin + 2 [molybdopterin-synthase sulfur-carrier protein]-C-terminal Gly-Gly + 2 H(+). It participates in cofactor biosynthesis; molybdopterin biosynthesis. In terms of biological role, converts molybdopterin precursor Z into molybdopterin. This requires the incorporation of two sulfur atoms into precursor Z to generate a dithiolene group. The sulfur is provided by MoaD. The sequence is that of Molybdopterin synthase catalytic subunit (moaE) from Staphylococcus epidermidis (strain ATCC 35984 / DSM 28319 / BCRC 17069 / CCUG 31568 / BM 3577 / RP62A).